Here is a 343-residue protein sequence, read N- to C-terminus: Methylthioribose-1-phosphate isomerase (343 aa).

Substrate is bound by residues 48-50 (RGA), Arg88, and Gln193. Asp234 serves as the catalytic Proton donor. 244–245 (NK) provides a ligand contact to substrate.

The protein belongs to the eIF-2B alpha/beta/delta subunits family. MtnA subfamily.

It carries out the reaction 5-(methylsulfanyl)-alpha-D-ribose 1-phosphate = 5-(methylsulfanyl)-D-ribulose 1-phosphate. Its pathway is amino-acid biosynthesis; L-methionine biosynthesis via salvage pathway; L-methionine from S-methyl-5-thio-alpha-D-ribose 1-phosphate: step 1/6. Its function is as follows. Catalyzes the interconversion of methylthioribose-1-phosphate (MTR-1-P) into methylthioribulose-1-phosphate (MTRu-1-P). In Thermotoga maritima (strain ATCC 43589 / DSM 3109 / JCM 10099 / NBRC 100826 / MSB8), this protein is Methylthioribose-1-phosphate isomerase.